The following is a 175-amino-acid chain: Gamma-crystallin-1 (175 aa).

Beta/gamma crystallin 'Greek key' domains follow at residues 2–40 (GKIF…RVEG) and 41–83 (GNWI…RFLP). Residues 84-88 (NYQGQ) form a connecting peptide region. Beta/gamma crystallin 'Greek key' domains are found at residues 89–129 (YKMR…NVFD) and 130–172 (GHWM…RRVY).

Belongs to the beta/gamma-crystallin family. As to quaternary structure, monomer.

In terms of biological role, crystallins are the dominant structural components of the vertebrate eye lens. This chain is Gamma-crystallin-1 (cryg1), found in Xenopus laevis (African clawed frog).